Here is a 157-residue protein sequence, read N- to C-terminus: Putative electron transport protein YsaA (157 aa).

4 consecutive 4Fe-4S ferredoxin-type domains span residues 2 to 32 (NRFI…NQDC), 48 to 80 (KDHC…REHG), 80 to 109 (GHIF…VVSS), and 112 to 144 (KARA…CMDV). [4Fe-4S] cluster contacts are provided by Cys-12, Cys-15, Cys-18, Cys-22, Cys-58, Cys-61, Cys-66, Cys-70, Cys-89, Cys-92, Cys-95, Cys-99, Cys-118, Cys-121, Cys-130, and Cys-134.

The sequence is that of Putative electron transport protein YsaA (ysaA) from Escherichia coli (strain K12).